The primary structure comprises 518 residues: MDRAPQRQHRASRELLAAKKTHTSQIEVIPCKICGDKSSGIHYGVITCEGCKGFFRRSQRCNAAYSCTRQQNCPIDRTSRNRCQHCRLQKCLALGMSRDAVKFGRMSKKQRDSLHAEVQKQLQQRQQQQQEPVVKTPPAGAQGADTLTYTLGLPDGQLPLGSSPDLPEASACPPGLLKASGSGPSYSNNLAKAGLNGASCHLEYSPERGKAEGRESFYSTGSQLTPDRCGLRFEEHRHPGLGELGQGPDSYGSPSFRSTPEAPYASLTEIEHLVQSVCKSYRETCQLRLEDLLRQRSNIFSREEVTGYQRKSMWEMWERCAHHLTEAIQYVVEFAKRLSGFMELCQNDQIVLLKAGAMEVVLVRMCRAYNADNRTVFFEGKYGGMELFRALGCSELISSIFDFSHSLSALHFSEDEIALYTALVLINAHRPGLQEKRKVEQLQYNLELAFHHHLCKTHRQSILAKLPPKGKLRSLCSQHVERLQIFQHLHPIVVQAAFPPLYKELFSTETESPVGLSK.

Positions 1–30 are modulating; it reads MDRAPQRQHRASRELLAAKKTHTSQIEVIP. NR C4-type zinc fingers lie at residues 31–51 and 67–91; these read CKIC…CEGC and CTRQ…LQKC. Positions 31–96 form a DNA-binding region, nuclear receptor; the sequence is CKICGDKSSG…RLQKCLALGM (66 aa). Disordered stretches follow at residues 105–183 and 238–258; these read RMSK…SGSG and HPGL…SFRS. Positions 109–118 are enriched in basic and acidic residues; sequence KQRDSLHAEV. The span at 119–130 shows a compositional bias: low complexity; the sequence is QKQLQQRQQQQQ. Residues 269 to 508 form the NR LBD domain; it reads EIEHLVQSVC…PPLYKELFST (240 aa). The AF-2 motif lies at 501–506; it reads LYKELF.

The protein belongs to the nuclear hormone receptor family. NR1 subfamily. In terms of assembly, interacts (via AF-2 motif) with the coactivator NCOA2 (via LXXLL motif). Interacts with the corepressor NCOR1. Interacts with CRY1. Interacts (via AF-2 motif) with the coactivators NCOA1 and PPARGC1A (via LXXLL motif). Interacts (via AF-2 motif) with PROX1. Interacts with FOXP3. Interacts with NR0B2. In terms of tissue distribution, isoform 1 is widely expressed in many tissues, including liver and adipose, and highly expressed in skeletal muscle. Isoform 2 is primarily expressed in immature thymocytes.

The protein localises to the nucleus. In terms of biological role, nuclear receptor that binds DNA as a monomer to ROR response elements (RORE) containing a single core motif half-site 5'-AGGTCA-3' preceded by a short A-T-rich sequence. Key regulator of cellular differentiation, immunity, peripheral circadian rhythm as well as lipid, steroid, xenobiotics and glucose metabolism. Considered to have intrinsic transcriptional activity, have some natural ligands like oxysterols that act as agonists (25-hydroxycholesterol) or inverse agonists (7-oxygenated sterols), enhancing or repressing the transcriptional activity, respectively. Recruits distinct combinations of cofactors to target gene regulatory regions to modulate their transcriptional expression, depending on the tissue, time and promoter contexts. Regulates the circadian expression of clock genes such as CRY1, BMAL1 and NR1D1 in peripheral tissues and in a tissue-selective manner. Competes with NR1D1 for binding to their shared DNA response element on some clock genes such as BMAL1, CRY1 and NR1D1 itself, resulting in NR1D1-mediated repression or RORC-mediated activation of the expression, leading to the circadian pattern of clock genes expression. Therefore influences the period length and stability of the clock. Involved in the regulation of the rhythmic expression of genes involved in glucose and lipid metabolism, including PLIN2 and AVPR1A. Negative regulator of adipocyte differentiation through the regulation of early phase genes expression, such as MMP3. Controls adipogenesis as well as adipocyte size and modulates insulin sensitivity in obesity. In liver, has specific and redundant functions with RORA as positive or negative modulator of expression of genes encoding phase I and Phase II proteins involved in the metabolism of lipids, steroids and xenobiotics, such as SULT1E1. Also plays a role in the regulation of hepatocyte glucose metabolism through the regulation of G6PC1 and PCK1. Regulates the rhythmic expression of PROX1 and promotes its nuclear localization. Plays an indispensable role in the induction of IFN-gamma dependent anti-mycobacterial systemic immunity. Functionally, essential for thymopoiesis and the development of several secondary lymphoid tissues, including lymph nodes and Peyer's patches. Required for the generation of LTi (lymphoid tissue inducer) cells. Regulates thymocyte survival through DNA-binding on ROREs of target gene promoter regions and recruitment of coactivaros via the AF-2. Also plays a key role, downstream of IL6 and TGFB and synergistically with RORA, for lineage specification of uncommitted CD4(+) T-helper (T(H)) cells into T(H)17 cells, antagonizing the T(H)1 program. Probably regulates IL17 and IL17F expression on T(H) by binding to the essential enhancer conserved non-coding sequence 2 (CNS2) in the IL17-IL17F locus. May also play a role in the pre-TCR activation cascade leading to the maturation of alpha/beta T-cells and may participate in the regulation of DNA accessibility in the TCR-J(alpha) locus. In Homo sapiens (Human), this protein is Nuclear receptor ROR-gamma (RORC).